A 262-amino-acid polypeptide reads, in one-letter code: Small ribosomal subunit protein eS1 (262 aa).

This sequence belongs to the eukaryotic ribosomal protein eS1 family. Component of the small ribosomal subunit. Mature ribosomes consist of a small (40S) and a large (60S) subunit. The 40S subunit contains about 32 different proteins and 1 molecule of RNA (18S). The 60S subunit contains about 42 different proteins and 3 molecules of RNA (28S, 5.8S and 5S).

The protein resides in the cytoplasm. Its function is as follows. Component of the ribosome, a large ribonucleoprotein complex responsible for the synthesis of proteins in the cell. The small ribosomal subunit (SSU) binds messenger RNAs (mRNAs) and translates the encoded message by selecting cognate aminoacyl-transfer RNA (tRNA) molecules. The large subunit (LSU) contains the ribosomal catalytic site termed the peptidyl transferase center (PTC), which catalyzes the formation of peptide bonds, thereby polymerizing the amino acids delivered by tRNAs into a polypeptide chain. The nascent polypeptides leave the ribosome through a tunnel in the LSU and interact with protein factors that function in enzymatic processing, targeting, and the membrane insertion of nascent chains at the exit of the ribosomal tunnel. The protein is Small ribosomal subunit protein eS1 of Plasmodium falciparum (isolate 3D7).